We begin with the raw amino-acid sequence, 76 residues long: Omega-scoloptoxin(15)-Ssd3c (76 aa).

A signal peptide spans 1–23 (MEKKIIFLVVLVALLALPEFISS).

It belongs to the scoloptoxin-15 family. Contains 2 disulfide bonds. In terms of tissue distribution, expressed by the venom gland.

Its subcellular location is the secreted. In terms of biological role, voltage-gated calcium channel inhibitor (Cav) (8.6% block at 10 nM), when tested on DRG neurons. In Scolopendra dehaani (Thai centipede), this protein is Omega-scoloptoxin(15)-Ssd3c.